A 485-amino-acid chain; its full sequence is Keratin, type I cytoskeletal 14 (485 aa).

Polar residues predominate over residues methionine 1–lysine 15. Positions methionine 1 to glycine 21 are disordered. The interval methionine 1 to serine 121 is head. Positions glutamate 122–tryptophan 157 are coil 1A. The IF rod domain maps to glutamate 122–leucine 433. Residues tyrosine 158–threonine 175 are linker 1. The segment at isoleucine 176–methionine 267 is coil 1B. Residues arginine 268–isoleucine 290 are linker 12. The segment at leucine 291 to glutamate 429 is coil 2. Residues aspartate 430–asparagine 485 are tail. Positions histidine 432–asparagine 485 are interaction with Type I keratins and keratin filaments. Low complexity predominate over residues glutamine 437–serine 451. The interval glutamine 437–asparagine 458 is disordered. Residue serine 448 is modified to Phosphoserine.

Belongs to the intermediate filament family. Heterotetramer of two type I and two type II keratins. Forms a disulfide-linked heterodimer (via 2B domains) with KRT5 (via 2B domains). Forms a heterodimer with KRT1; the interaction is more abundant in the absence of KRT5. Interacts with TRADD and with keratin filaments. Associates with other type I keratins. Interacts with EPPK1. Interacts with KLHL24. Interacts with PKP1 (via N-terminus) and PKP2. Post-translationally, a disulfide bond is formed between rather than within filaments and promotes the formation of a keratin filament cage around the nucleus. Ubiquitinated by the BCR(KLHL24) E3 ubiquitin ligase complex. As to expression, expressed in most cells of squamous cell carcinomas, in spinous and suprabasal cells around the branching papillary region of papillomas, and weakly in a few proliferative cells of hyperplastic tissue.

It is found in the cytoplasm. Its subcellular location is the nucleus. The nonhelical tail domain is involved in promoting KRT5-KRT14 filaments to self-organize into large bundles and enhances the mechanical properties involved in resilience of keratin intermediate filaments in vitro. The protein is Keratin, type I cytoskeletal 14 (Krt14) of Rattus norvegicus (Rat).